The sequence spans 356 residues: Arginine kinase Lit v 2.0101 (356 aa).

In terms of domain architecture, Phosphagen kinase N-terminal spans 9 to 91 (KLEAGFKKLE…FDPIIEDYHV (83 aa)). 64–68 (GVGIY) is a binding site for L-arginine. The 238-residue stretch at 119 to 356 (FVISTRVRCG…LELIKIEKEM (238 aa)) folds into the Phosphagen kinase C-terminal domain. ATP contacts are provided by residues 122–126 (STRVR) and His-185. Position 225 (Glu-225) interacts with L-arginine. Arg-229 contributes to the ATP binding site. Cys-271 serves as a coordination point for L-arginine. ATP is bound by residues 280 to 284 (RASVH) and 309 to 314 (RGTRGE). Glu-314 provides a ligand contact to L-arginine.

It belongs to the ATP:guanido phosphotransferase family. As to quaternary structure, monomer. As to expression, muscle (at protein level).

The catalysed reaction is L-arginine + ATP = N(omega)-phospho-L-arginine + ADP + H(+). It catalyses the reaction dTDP + ATP = dTTP + ADP. Functionally, catalyzes the reversible transfer of high energy ATP gamma-phosphate group to L-arginine. Has nucleoside diphosphate kinase-like activity toward dTDP. Binds and phosphorylates dTDP using ATP as a phosphate donor. Does not phosphorylate dADP, dCDP, dGDP, dTMP or thymidine. The sequence is that of Arginine kinase Lit v 2.0101 from Penaeus vannamei (Whiteleg shrimp).